The following is a 257-amino-acid chain: Acetylglutamate kinase (257 aa).

Residues 43–44, Arg65, and Asn157 each bind substrate; that span reads GG. Residues 180-185 and 208-210 each bind ATP; these read DVSGIL and IIT.

Belongs to the acetylglutamate kinase family. ArgB subfamily. As to quaternary structure, homodimer.

The protein resides in the cytoplasm. The catalysed reaction is N-acetyl-L-glutamate + ATP = N-acetyl-L-glutamyl 5-phosphate + ADP. Its pathway is amino-acid biosynthesis; L-arginine biosynthesis; N(2)-acetyl-L-ornithine from L-glutamate: step 2/4. Functionally, catalyzes the ATP-dependent phosphorylation of N-acetyl-L-glutamate. This chain is Acetylglutamate kinase, found in Salmonella paratyphi A (strain AKU_12601).